Consider the following 99-residue polypeptide: Small ribosomal subunit protein eS24 (99 aa).

This sequence belongs to the eukaryotic ribosomal protein eS24 family.

The protein is Small ribosomal subunit protein eS24 of Methanothrix thermoacetophila (strain DSM 6194 / JCM 14653 / NBRC 101360 / PT) (Methanosaeta thermophila).